The sequence spans 393 residues: MTNSNRIKLTWISFLSYALTGALVIVTGMVMGNIADYFNLPVSSMSNTFTFLNAGILISIFLNAWLMEIVPLKTQLRFGFLLMVLAVAGLMFSHSLALFSAAMFILGVVSGITMSIGTFLITQMYEGRQRGSRLLFTDSFFSMAGMIFPMIAAFLLARSIEWYWVYACIGLVYVAIFILTFGCEFPALGKHAPKTDAPVAKEKWGIGVLFLSVAALCYILGQLGFISWVPEYAKGLGMSLNDAGTLVSNFWMSYMVGMWAFSFILRFFDLQRILTVLAGLAAILMYVFNTGTPAHMAWSILTLGFFSSAIYTTIITLGSQQTKVPSPKLVNFVLTCGTIGTMLTFVVTGPIVEHSGPQAALLTANGLYAVVFVMCFLLGFVSRHRQHNTLTSH.

12 helical membrane passes run Trp-11–Met-31, Phe-51–Pro-71, Phe-78–Leu-98, Ala-101–Ile-121, Leu-134–Phe-154, Trp-162–Gly-182, Ile-206–Ile-226, Thr-245–Leu-265, Ile-273–Pro-293, Ala-297–Leu-317, Phe-332–Val-352, and Leu-361–Val-381.

It belongs to the major facilitator superfamily. TsgA family.

It localises to the cell inner membrane. The polypeptide is Protein TsgA (Shigella dysenteriae serotype 1 (strain Sd197)).